The chain runs to 154 residues: Small ribosomal subunit protein uS7 (154 aa).

This sequence belongs to the universal ribosomal protein uS7 family. As to quaternary structure, part of the 30S ribosomal subunit. Contacts proteins S9 and S11.

One of the primary rRNA binding proteins, it binds directly to 16S rRNA where it nucleates assembly of the head domain of the 30S subunit. Is located at the subunit interface close to the decoding center, probably blocks exit of the E-site tRNA. This Karelsulcia muelleri (strain GWSS) (Sulcia muelleri) protein is Small ribosomal subunit protein uS7.